We begin with the raw amino-acid sequence, 276 residues long: Large ribosomal subunit protein uL2 (276 aa).

Disordered stretches follow at residues 37-59 (QIQK…GGHK) and 225-276 (VMNP…RHKR). Polar residues predominate over residues 39–49 (QKSGRNNNGHI). Over residues 50 to 59 (TTRHKGGGHK) the composition is skewed to basic residues.

Belongs to the universal ribosomal protein uL2 family. In terms of assembly, part of the 50S ribosomal subunit. Forms a bridge to the 30S subunit in the 70S ribosome.

One of the primary rRNA binding proteins. Required for association of the 30S and 50S subunits to form the 70S ribosome, for tRNA binding and peptide bond formation. It has been suggested to have peptidyltransferase activity; this is somewhat controversial. Makes several contacts with the 16S rRNA in the 70S ribosome. The polypeptide is Large ribosomal subunit protein uL2 (Ralstonia pickettii (strain 12J)).